Reading from the N-terminus, the 205-residue chain is TATA-box-binding protein (205 aa).

2 consecutive repeat copies span residues Leu27–Ile103 and Ile117–Leu194.

This sequence belongs to the TBP family. Belongs to the TFIID complex together with the TBP-associated factors (TAFs). Binds DNA as monomer.

The protein localises to the nucleus. Its function is as follows. General transcription factor that functions at the core of the DNA-binding multiprotein factor TFIID. Binding of TFIID to the TATA box is the initial transcriptional step of the pre-initiation complex (PIC), playing a role in the activation of eukaryotic genes transcribed by RNA polymerase II. The polypeptide is TATA-box-binding protein (tbpA) (Dictyostelium discoideum (Social amoeba)).